Here is a 207-residue protein sequence, read N- to C-terminus: Nuclear transcription factor Y subunit beta (207 aa).

Positions 1-52 (MTMDGDSSTTDASQLGISADYIGGSHYVIQPHDDTEDSMNDHEDTNGSKESF) are a domain. Residues 27–52 (YVIQPHDDTEDSMNDHEDTNGSKESF) are disordered. Over residues 39–52 (MNDHEDTNGSKESF) the composition is skewed to basic and acidic residues. A b domain region spans residues 53-142 (REQDIYLPIA…PLKLYLQKFR (90 aa)). Residues 59–65 (LPIANVA) mediate DNA binding. The interval 86–97 (VQECVSEFISFI) is subunit association domain (SAD). Residue Lys-140 forms a Glycyl lysine isopeptide (Lys-Gly) (interchain with G-Cter in ubiquitin) linkage. The tract at residues 143 to 207 (EAMKGEKGIG…ISGVQQIQFS (65 aa)) is c domain.

Belongs to the NFYB/HAP3 subunit family. In terms of assembly, heterotrimeric transcription factor composed of three components, NF-YA, NF-YB and NF-YC. NF-YB and NF-YC must interact and dimerize for NF-YA association and DNA binding. Interacts with C1QBP. Monoubiquitination at Lys-140 plays an important role in transcriptional activation by allowing the deposition of histone H3 methylations as well as histone H2B monoubiquitination at 'Lys-121'.

The protein localises to the nucleus. Functionally, component of the sequence-specific heterotrimeric transcription factor (NF-Y) which specifically recognizes a 5'-CCAAT-3' box motif found in the promoters of its target genes. NF-Y can function as both an activator and a repressor, depending on its interacting cofactors. The protein is Nuclear transcription factor Y subunit beta (NFYB) of Bos taurus (Bovine).